We begin with the raw amino-acid sequence, 199 residues long: 5'-deoxynucleotidase YfbR (199 aa).

Substrate is bound by residues 18–19 (RW) and H33. Residues 30–142 (VSEHSLQVAM…VKQADALCAY (113 aa)) form the HD domain. Positions 33, 68, and 69 each coordinate a divalent metal cation. Residues D69, 77 to 80 (DLPT), and D137 each bind substrate. Residue D137 coordinates a divalent metal cation.

It belongs to the 5DNU family. As to quaternary structure, homodimer. A divalent metal cation is required as a cofactor.

Its subcellular location is the cytoplasm. It carries out the reaction a 2'-deoxyribonucleoside 5'-phosphate + H2O = a 2'-deoxyribonucleoside + phosphate. In terms of biological role, catalyzes the strictly specific dephosphorylation of 2'-deoxyribonucleoside 5'-monophosphates. The protein is 5'-deoxynucleotidase YfbR of Shigella flexneri serotype 5b (strain 8401).